Here is a 253-residue protein sequence, read N- to C-terminus: Ubiquinone/menaquinone biosynthesis C-methyltransferase UbiE (253 aa).

S-adenosyl-L-methionine is bound by residues threonine 76, aspartate 97, 125–126 (NA), and serine 142.

This sequence belongs to the class I-like SAM-binding methyltransferase superfamily. MenG/UbiE family.

It carries out the reaction a 2-demethylmenaquinol + S-adenosyl-L-methionine = a menaquinol + S-adenosyl-L-homocysteine + H(+). The catalysed reaction is a 2-methoxy-6-(all-trans-polyprenyl)benzene-1,4-diol + S-adenosyl-L-methionine = a 5-methoxy-2-methyl-3-(all-trans-polyprenyl)benzene-1,4-diol + S-adenosyl-L-homocysteine + H(+). It functions in the pathway quinol/quinone metabolism; menaquinone biosynthesis; menaquinol from 1,4-dihydroxy-2-naphthoate: step 2/2. It participates in cofactor biosynthesis; ubiquinone biosynthesis. In terms of biological role, methyltransferase required for the conversion of demethylmenaquinol (DMKH2) to menaquinol (MKH2) and the conversion of 2-polyprenyl-6-methoxy-1,4-benzoquinol (DDMQH2) to 2-polyprenyl-3-methyl-6-methoxy-1,4-benzoquinol (DMQH2). This chain is Ubiquinone/menaquinone biosynthesis C-methyltransferase UbiE, found in Xanthomonas axonopodis pv. citri (strain 306).